Here is a 451-residue protein sequence, read N- to C-terminus: GABA transporter 1 (451 aa).

11 helical membrane-spanning segments follow: residues 35–55 (CGFH…PYAF), 57–77 (FLGW…TFYS), 115–135 (VGPI…LLGG), 153–173 (LFEF…FPSF), 182–202 (LSLL…IYIG), 222–242 (VFGI…GIIP), 262–282 (MCYL…YWAF), 308–328 (FIFL…VVYL), 356–376 (LVVR…LPFF), 382–402 (LLGA…FFNF), and 411–431 (FIFW…VIAM).

This sequence belongs to the amino acid/polyamine transporter 2 family. Amino acid/auxin permease (AAAP) (TC 2.A.18.2) subfamily. Highly expressed in flowers and at lower levels in roots, leaves and stems.

Its subcellular location is the cell membrane. In terms of biological role, high affinity gamma-aminobutyric acid (GABA) transporter probably involved in GABA uptake into cells. When expressed in a heterologous system (Xenopus oocytes), imports GABA, butylamine, beta- and L-Alanine, 5-aminovaleric acid, 6-aminocaproic acid and 8-aminocaprylic acid, but does not mediate the transport of proline or glycine betaine. This is GABA transporter 1 (GAT1) from Arabidopsis thaliana (Mouse-ear cress).